A 133-amino-acid polypeptide reads, in one-letter code: ATP synthase epsilon chain, chloroplastic (133 aa).

The protein belongs to the ATPase epsilon chain family. As to quaternary structure, F-type ATPases have 2 components, CF(1) - the catalytic core - and CF(0) - the membrane proton channel. CF(1) has five subunits: alpha(3), beta(3), gamma(1), delta(1), epsilon(1). CF(0) has three main subunits: a, b and c.

It localises to the plastid. Its subcellular location is the chloroplast thylakoid membrane. Its function is as follows. Produces ATP from ADP in the presence of a proton gradient across the membrane. The chain is ATP synthase epsilon chain, chloroplastic from Solanum lycopersicum (Tomato).